The following is a 445-amino-acid chain: Glutamate-1-semialdehyde 2,1-aminomutase (445 aa).

N6-(pyridoxal phosphate)lysine is present on lysine 264.

This sequence belongs to the class-III pyridoxal-phosphate-dependent aminotransferase family. HemL subfamily. Pyridoxal 5'-phosphate serves as cofactor.

Its subcellular location is the cytoplasm. It carries out the reaction (S)-4-amino-5-oxopentanoate = 5-aminolevulinate. It participates in porphyrin-containing compound metabolism; protoporphyrin-IX biosynthesis; 5-aminolevulinate from L-glutamyl-tRNA(Glu): step 2/2. This is Glutamate-1-semialdehyde 2,1-aminomutase from Halobacterium salinarum (strain ATCC 29341 / DSM 671 / R1).